An 818-amino-acid polypeptide reads, in one-letter code: Glycogen phosphorylase (818 aa).

N6-(pyridoxal phosphate)lysine is present on lysine 667.

This sequence belongs to the glycogen phosphorylase family. Pyridoxal 5'-phosphate is required as a cofactor.

It catalyses the reaction [(1-&gt;4)-alpha-D-glucosyl](n) + phosphate = [(1-&gt;4)-alpha-D-glucosyl](n-1) + alpha-D-glucose 1-phosphate. Functionally, phosphorylase is an important allosteric enzyme in carbohydrate metabolism. Enzymes from different sources differ in their regulatory mechanisms and in their natural substrates. However, all known phosphorylases share catalytic and structural properties. The protein is Glycogen phosphorylase (glgP) of Pasteurella multocida (strain Pm70).